The chain runs to 138 residues: MSHLFILSCSVYDFSSILLHQYFTQFFVLRYASPSMHLDWRFPSLRIHSYPKDQSTHAWKMHCMPTEIIAYQPIPVFQRLLHSNDIYFPYFQTRYTTLIMFNTVCSSSPNPVFTLTKVIARKKGKHWIGSPCHSAESS.

This is an uncharacterized protein from Schizosaccharomyces pombe (strain 972 / ATCC 24843) (Fission yeast).